The following is a 225-amino-acid chain: Small ribosomal subunit protein uS3 (225 aa).

The KH type-2 domain maps to 16-85 (VYEYLVKETE…TPQIEVKDVK (70 aa)). Residues 200–225 (GENVGTESETDKADEQGREAANTEES) are disordered. Residues 208–217 (ETDKADEQGR) are compositionally biased toward basic and acidic residues.

This sequence belongs to the universal ribosomal protein uS3 family. Part of the 30S ribosomal subunit.

Binds the lower part of the 30S subunit head. The chain is Small ribosomal subunit protein uS3 from Thermoplasma volcanium (strain ATCC 51530 / DSM 4299 / JCM 9571 / NBRC 15438 / GSS1).